A 151-amino-acid chain; its full sequence is MTVTTERIARIIESKEIMTLLPHRYPFLLVDRVTDYEEGKWLTAIKNVSVNEPCFTGHFPDQPILPGVLILEALAQAMGILAFKTHELSNKELFYFAGVDEARFKRPILPGDQMMLKVEVIRERRGITAFTGVASVNGEVACEAKLMCARR.

His58 is a catalytic residue.

It belongs to the thioester dehydratase family. FabZ subfamily.

The protein resides in the cytoplasm. It carries out the reaction a (3R)-hydroxyacyl-[ACP] = a (2E)-enoyl-[ACP] + H2O. Its function is as follows. Involved in unsaturated fatty acids biosynthesis. Catalyzes the dehydration of short chain beta-hydroxyacyl-ACPs and long chain saturated and unsaturated beta-hydroxyacyl-ACPs. This is 3-hydroxyacyl-[acyl-carrier-protein] dehydratase FabZ from Histophilus somni (strain 129Pt) (Haemophilus somnus).